Reading from the N-terminus, the 122-residue chain is Holo-[acyl-carrier-protein] synthase (122 aa).

Residues aspartate 9 and glutamate 58 each contribute to the Mg(2+) site.

It belongs to the P-Pant transferase superfamily. AcpS family. Mg(2+) serves as cofactor.

Its subcellular location is the cytoplasm. It catalyses the reaction apo-[ACP] + CoA = holo-[ACP] + adenosine 3',5'-bisphosphate + H(+). Transfers the 4'-phosphopantetheine moiety from coenzyme A to a Ser of acyl-carrier-protein. In Chlamydia caviae (strain ATCC VR-813 / DSM 19441 / 03DC25 / GPIC) (Chlamydophila caviae), this protein is Holo-[acyl-carrier-protein] synthase.